We begin with the raw amino-acid sequence, 129 residues long: Small ribosomal subunit protein uS9 (129 aa).

It belongs to the universal ribosomal protein uS9 family.

The protein is Small ribosomal subunit protein uS9 (rpsI) of Helicobacter pylori (strain J99 / ATCC 700824) (Campylobacter pylori J99).